Consider the following 620-residue polypeptide: Probable potassium transport system protein Kup 1 (620 aa).

Transmembrane regions (helical) follow at residues 7–27, 50–70, 102–122, 136–156, 168–188, 211–231, 246–266, 284–304, 336–356, 368–388, 393–413, and 415–435; these read GIGL…TSPL, VLSL…VIVI, MMLG…TPAI, PDLK…LFAI, FGPV…ANIV, LMSF…EALY, WFGL…ALLI, MVVP…QAVI, IYVP…VVGF, IAVT…AALL, PVVV…FFAA, and IIKV…SFTV.

The protein belongs to the HAK/KUP transporter (TC 2.A.72) family.

It localises to the cell inner membrane. The catalysed reaction is K(+)(in) + H(+)(in) = K(+)(out) + H(+)(out). Functionally, transport of potassium into the cell. Likely operates as a K(+):H(+) symporter. This is Probable potassium transport system protein Kup 1 from Rhodopseudomonas palustris (strain ATCC BAA-98 / CGA009).